The sequence spans 400 residues: Serine/threonine transporter SstT (400 aa).

A run of 9 helical transmembrane segments spans residues 9-29 (LVTQ…VWPA), 36-56 (ILGS…VFVL), 75-95 (VLVL…VASM), 134-154 (ALLE…GLAL), 175-195 (VIQL…ASTF), 209-229 (LLAV…PLIV), 281-301 (IAIP…ISVL), 323-343 (VVAS…LLLI), and 349-369 (LFGI…IIGI).

Belongs to the dicarboxylate/amino acid:cation symporter (DAACS) (TC 2.A.23) family.

The protein resides in the cell inner membrane. It carries out the reaction L-serine(in) + Na(+)(in) = L-serine(out) + Na(+)(out). It catalyses the reaction L-threonine(in) + Na(+)(in) = L-threonine(out) + Na(+)(out). In terms of biological role, involved in the import of serine and threonine into the cell, with the concomitant import of sodium (symport system). The protein is Serine/threonine transporter SstT of Acidovorax sp. (strain JS42).